A 70-amino-acid polypeptide reads, in one-letter code: Beta-defensin 43 (70 aa).

A signal peptide spans 1 to 22; that stretch reads MRLLLSILGVLTLLSILPLARS. 2 disulfide bridges follow: Cys-29–Cys-57 and Cys-36–Cys-50.

Belongs to the beta-defensin family.

The protein resides in the secreted. Has bactericidal activity. This is Beta-defensin 43 (Defb43) from Rattus norvegicus (Rat).